The sequence spans 560 residues: Alpha-farnesene synthase (560 aa).

Residues D308, D312, and E462 each contribute to the Mg(2+) site. The DDXXD motif signature appears at 308 to 312; the sequence is DDIYD.

This sequence belongs to the terpene synthase family. Tpsa subfamily. The cofactor is Mg(2+). Expressed in the rind tissues of ripe fruits.

Its subcellular location is the cytoplasm. It carries out the reaction (2E,6E)-farnesyl diphosphate = (3E,6E)-alpha-farnesene + diphosphate. It participates in secondary metabolite biosynthesis; terpenoid biosynthesis. Its function is as follows. Sesquiterpene synthase producing exclusively alpha-farnesene. Associated with the production of sesquiterpenes responsible for the aroma of the fruit. In Cucumis melo (Muskmelon), this protein is Alpha-farnesene synthase.